A 63-amino-acid polypeptide reads, in one-letter code: Beta-defensin 5 (63 aa).

A signal peptide spans 1–22 (MRIHYLLFSFLLVLLSPLSVFT). Q23 is subject to Pyrrolidone carboxylic acid. 3 disulfide bridges follow: C31–C59, C38–C52, and C42–C60.

This sequence belongs to the beta-defensin family.

Its subcellular location is the secreted. In terms of biological role, has antibacterial activity. The chain is Beta-defensin 5 (Defb5) from Rattus norvegicus (Rat).